A 254-amino-acid polypeptide reads, in one-letter code: Pyruvate dehydrogenase complex repressor (254 aa).

An HTH gntR-type domain is found at 9–77 (PKLSDVIEQQ…QGGGTFVQSS (69 aa)). The H-T-H motif DNA-binding region spans 37-56 (ERELAKQFDVSRPSLREAIQ).

Transcriptional repressor for the pyruvate dehydrogenase complex genes aceEF and lpd. The polypeptide is Pyruvate dehydrogenase complex repressor (pdhR) (Salmonella typhi).